Here is a 171-residue protein sequence, read N- to C-terminus: Peptide methionine sulfoxide reductase MsrA (171 aa).

Cys13 is an active-site residue.

Belongs to the MsrA Met sulfoxide reductase family.

It catalyses the reaction L-methionyl-[protein] + [thioredoxin]-disulfide + H2O = L-methionyl-(S)-S-oxide-[protein] + [thioredoxin]-dithiol. The catalysed reaction is [thioredoxin]-disulfide + L-methionine + H2O = L-methionine (S)-S-oxide + [thioredoxin]-dithiol. Functionally, has an important function as a repair enzyme for proteins that have been inactivated by oxidation. Catalyzes the reversible oxidation-reduction of methionine sulfoxide in proteins to methionine. The chain is Peptide methionine sulfoxide reductase MsrA from Mycobacterium ulcerans (strain Agy99).